A 441-amino-acid polypeptide reads, in one-letter code: Thymidine phosphorylase (441 aa).

The protein belongs to the thymidine/pyrimidine-nucleoside phosphorylase family. As to quaternary structure, homodimer.

The catalysed reaction is thymidine + phosphate = 2-deoxy-alpha-D-ribose 1-phosphate + thymine. It functions in the pathway pyrimidine metabolism; dTMP biosynthesis via salvage pathway; dTMP from thymine: step 1/2. Its function is as follows. The enzymes which catalyze the reversible phosphorolysis of pyrimidine nucleosides are involved in the degradation of these compounds and in their utilization as carbon and energy sources, or in the rescue of pyrimidine bases for nucleotide synthesis. The protein is Thymidine phosphorylase of Chromobacterium violaceum (strain ATCC 12472 / DSM 30191 / JCM 1249 / CCUG 213 / NBRC 12614 / NCIMB 9131 / NCTC 9757 / MK).